Here is a 211-residue protein sequence, read N- to C-terminus: Regulator of G-protein signaling 2 (211 aa).

A necessary for membrane association region spans residues 32–66 (KMKRTLLKDWKTRLSYFLQNSSAPGKPKTGKKSKQ). The interval 79–116 (LWAEAFDELLASKYGLAAFRAFLKSEFCEENIEFWLAC) is necessary to inhibit protein synthesis. In terms of domain architecture, RGS spans 83–199 (AFDELLASKY…LESEFYQDLC (117 aa)).

As to quaternary structure, interacts with GNAQ. Does not interact with GNAI1 and GNAI3. Interacts with EIF2B5. Interacts with PRKG1 (isoform alpha). Post-translationally, phosphorylated by protein kinase C. Phosphorylation by PRKG1 leads to activation of RGS2 activity. In terms of tissue distribution, expressed in a wide variety of tissues.

The protein localises to the cell membrane. The protein resides in the cytoplasm. It localises to the nucleus. Its subcellular location is the nucleolus. Functionally, regulates G protein-coupled receptor signaling cascades. Inhibits signal transduction by increasing the GTPase activity of G protein alpha subunits, thereby driving them into their inactive GDP-bound form. It is involved in the negative regulation of the angiotensin-activated signaling pathway. Plays a role in the regulation of blood pressure in response to signaling via G protein-coupled receptors and GNAQ. Plays a role in regulating the constriction and relaxation of vascular smooth muscle. Binds EIF2B5 and blocks its activity, thereby inhibiting the translation of mRNA into protein. The polypeptide is Regulator of G-protein signaling 2 (Rgs2) (Mus musculus (Mouse)).